We begin with the raw amino-acid sequence, 258 residues long: Imidazole glycerol phosphate synthase subunit HisF (258 aa).

Residues Asp11 and Asp130 contribute to the active site.

The protein belongs to the HisA/HisF family. In terms of assembly, heterodimer of HisH and HisF.

It is found in the cytoplasm. It catalyses the reaction 5-[(5-phospho-1-deoxy-D-ribulos-1-ylimino)methylamino]-1-(5-phospho-beta-D-ribosyl)imidazole-4-carboxamide + L-glutamine = D-erythro-1-(imidazol-4-yl)glycerol 3-phosphate + 5-amino-1-(5-phospho-beta-D-ribosyl)imidazole-4-carboxamide + L-glutamate + H(+). The protein operates within amino-acid biosynthesis; L-histidine biosynthesis; L-histidine from 5-phospho-alpha-D-ribose 1-diphosphate: step 5/9. IGPS catalyzes the conversion of PRFAR and glutamine to IGP, AICAR and glutamate. The HisF subunit catalyzes the cyclization activity that produces IGP and AICAR from PRFAR using the ammonia provided by the HisH subunit. This chain is Imidazole glycerol phosphate synthase subunit HisF, found in Escherichia fergusonii (strain ATCC 35469 / DSM 13698 / CCUG 18766 / IAM 14443 / JCM 21226 / LMG 7866 / NBRC 102419 / NCTC 12128 / CDC 0568-73).